The chain runs to 392 residues: Lipase (392 aa).

Residues 1 to 26 (MVSFISISQGVSLCLLVSSMMLGSSA) form the signal peptide. A propeptide spanning residues 27–95 (VPVSGKSGSS…GGNLTSIGKR (69 aa)) is cleaved from the precursor. The interval 50 to 69 (PLISSRCAPPSNKGSKSDLQ) is disordered. 3 disulfide bridges follow: C152–C391, C163–C166, and C358–C367. S268 (nucleophile) is an active-site residue. Residue D327 is the Charge relay system of the active site. A Ca(2+)-binding site is contributed by D379. The Charge relay system role is filled by H380.

It belongs to the AB hydrolase superfamily. Lipase family.

It localises to the secreted. It is found in the extracellular space. It catalyses the reaction a triacylglycerol + H2O = a diacylglycerol + a fatty acid + H(+). Lipase activity is maximal at a lipid-water interface (interfacial activation), probably by an induced conformational change that results in an increased accessibility of the active site to the substrate. Hydrolyzes ester bonds of triglycerides as well as of their derived partial glycerides with a strong 1,3-positional specificity. In Rhizopus niveus, this protein is Lipase.